Reading from the N-terminus, the 360-residue chain is Ribosomal RNA small subunit methyltransferase C (360 aa).

The protein belongs to the methyltransferase superfamily. RsmC family. Monomer.

It localises to the cytoplasm. The enzyme catalyses guanosine(1207) in 16S rRNA + S-adenosyl-L-methionine = N(2)-methylguanosine(1207) in 16S rRNA + S-adenosyl-L-homocysteine + H(+). In terms of biological role, specifically methylates the guanine in position 1207 of 16S rRNA in the 30S particle. This is Ribosomal RNA small subunit methyltransferase C from Alteromonas mediterranea (strain DSM 17117 / CIP 110805 / LMG 28347 / Deep ecotype).